A 248-amino-acid chain; its full sequence is GTP cyclohydrolase 1 type 2 homolog (248 aa).

A divalent metal cation contacts are provided by H64, H65, D101, H216, and E220.

It belongs to the GTP cyclohydrolase I type 2/NIF3 family. Homohexamer.

The polypeptide is GTP cyclohydrolase 1 type 2 homolog (Borreliella burgdorferi (strain ATCC 35210 / DSM 4680 / CIP 102532 / B31) (Borrelia burgdorferi)).